The following is a 152-amino-acid chain: D-aminoacyl-tRNA deacylase (152 aa).

The Gly-cisPro motif, important for rejection of L-amino acids signature appears at 142–143 (GP).

This sequence belongs to the DTD family. Homodimer.

It is found in the cytoplasm. It carries out the reaction glycyl-tRNA(Ala) + H2O = tRNA(Ala) + glycine + H(+). The enzyme catalyses a D-aminoacyl-tRNA + H2O = a tRNA + a D-alpha-amino acid + H(+). Functionally, an aminoacyl-tRNA editing enzyme that deacylates mischarged D-aminoacyl-tRNAs. Also deacylates mischarged glycyl-tRNA(Ala), protecting cells against glycine mischarging by AlaRS. Acts via tRNA-based rather than protein-based catalysis; rejects L-amino acids rather than detecting D-amino acids in the active site. By recycling D-aminoacyl-tRNA to D-amino acids and free tRNA molecules, this enzyme counteracts the toxicity associated with the formation of D-aminoacyl-tRNA entities in vivo and helps enforce protein L-homochirality. The sequence is that of D-aminoacyl-tRNA deacylase from Burkholderia vietnamiensis (strain G4 / LMG 22486) (Burkholderia cepacia (strain R1808)).